A 151-amino-acid chain; its full sequence is UPF0178 protein Caul_3070 (151 aa).

It belongs to the UPF0178 family.

The protein is UPF0178 protein Caul_3070 of Caulobacter sp. (strain K31).